An 87-amino-acid chain; its full sequence is UPF0213 protein SSA_0709 (87 aa).

The region spanning 3–78 is the GIY-YIG domain; the sequence is NKAYMYVLEC…KKKTRQAKLA (76 aa).

Belongs to the UPF0213 family.

In Streptococcus sanguinis (strain SK36), this protein is UPF0213 protein SSA_0709.